The primary structure comprises 241 residues: Ribonuclease PH (241 aa).

Phosphate contacts are provided by residues arginine 90 and 128-130; that span reads GTR.

It belongs to the RNase PH family. As to quaternary structure, homohexameric ring arranged as a trimer of dimers.

It catalyses the reaction tRNA(n+1) + phosphate = tRNA(n) + a ribonucleoside 5'-diphosphate. In terms of biological role, phosphorolytic 3'-5' exoribonuclease that plays an important role in tRNA 3'-end maturation. Removes nucleotide residues following the 3'-CCA terminus of tRNAs; can also add nucleotides to the ends of RNA molecules by using nucleoside diphosphates as substrates, but this may not be physiologically important. Probably plays a role in initiation of 16S rRNA degradation (leading to ribosome degradation) during starvation. This is Ribonuclease PH from Corynebacterium diphtheriae (strain ATCC 700971 / NCTC 13129 / Biotype gravis).